The sequence spans 404 residues: Cysteine desulfurase IscS (404 aa).

Residues 75-76, Asn155, Gln183, and 203-205 each bind pyridoxal 5'-phosphate; these read AT and SAH. Lys206 is subject to N6-(pyridoxal phosphate)lysine. Thr243 lines the pyridoxal 5'-phosphate pocket. The Cysteine persulfide intermediate role is filled by Cys328. Cys328 serves as a coordination point for [2Fe-2S] cluster.

Belongs to the class-V pyridoxal-phosphate-dependent aminotransferase family. NifS/IscS subfamily. As to quaternary structure, homodimer. Forms a heterotetramer with IscU, interacts with other sulfur acceptors. Requires pyridoxal 5'-phosphate as cofactor.

It localises to the cytoplasm. It carries out the reaction (sulfur carrier)-H + L-cysteine = (sulfur carrier)-SH + L-alanine. The protein operates within cofactor biosynthesis; iron-sulfur cluster biosynthesis. Master enzyme that delivers sulfur to a number of partners involved in Fe-S cluster assembly, tRNA modification or cofactor biosynthesis. Catalyzes the removal of elemental sulfur atoms from cysteine to produce alanine. Functions as a sulfur delivery protein for Fe-S cluster synthesis onto IscU, an Fe-S scaffold assembly protein, as well as other S acceptor proteins. This is Cysteine desulfurase IscS from Shewanella woodyi (strain ATCC 51908 / MS32).